Reading from the N-terminus, the 544-residue chain is Membrane protein insertase YidC (544 aa).

5 helical membrane passes run 6-26, 343-363, 418-438, 456-476, and 497-517; these read NLLL…WETD, KFLH…TFIV, LGGC…YYML, LSAQ…MFFI, and PVIF…YYIV.

It belongs to the OXA1/ALB3/YidC family. Type 1 subfamily. In terms of assembly, interacts with the Sec translocase complex via SecD. Specifically interacts with transmembrane segments of nascent integral membrane proteins during membrane integration.

Its subcellular location is the cell inner membrane. Required for the insertion and/or proper folding and/or complex formation of integral membrane proteins into the membrane. Involved in integration of membrane proteins that insert both dependently and independently of the Sec translocase complex, as well as at least some lipoproteins. Aids folding of multispanning membrane proteins. This Pectobacterium atrosepticum (strain SCRI 1043 / ATCC BAA-672) (Erwinia carotovora subsp. atroseptica) protein is Membrane protein insertase YidC.